Reading from the N-terminus, the 362-residue chain is Serine/threonine-protein kinase SRK2D (362 aa).

One can recognise a Protein kinase domain in the interval Y23–F279. Residues I29 to A37 and K52 each bind ATP. The Proton acceptor role is filled by D142.

This sequence belongs to the protein kinase superfamily. Ser/Thr protein kinase family. As to quaternary structure, interacts with ABI1. Interacts with I-2, TOPP1 and TOPP2. Interacts with FREE1 (via C-terminus). As to expression, expressed in seeds, seedlings, roots (especially in tips), stems, leaves, shoots, flowers and siliques.

It catalyses the reaction L-seryl-[protein] + ATP = O-phospho-L-seryl-[protein] + ADP + H(+). It carries out the reaction L-threonyl-[protein] + ATP = O-phospho-L-threonyl-[protein] + ADP + H(+). Together with SRK2I, key component and activator of the abscisic acid (ABA) signaling pathway that regulates numerous ABA responses, such as seed germination, Pro accumulation, root growth inhibition, dormancy and seedling growth, and, to a lesser extent, stomatal closure. In response to ABA, phosphorylates the ESCRT-I complex component FREE1, which is required for ABA-induced FREE1 nuclear import. The chain is Serine/threonine-protein kinase SRK2D (SRK2D) from Arabidopsis thaliana (Mouse-ear cress).